Consider the following 291-residue polypeptide: Neugrin (291 aa).

The N-terminal stretch at 1–15 (MAVTLSLLLGGRVCA) is a signal peptide. Disordered stretches follow at residues 26 to 48 (GVAG…PEER) and 155 to 270 (GSGN…DNFS). Phosphoserine is present on Ser-41. Asn-158 and Asn-186 each carry an N-linked (GlcNAc...) asparagine glycan. A compositionally biased stretch (polar residues) spans 236–246 (KYSSDSESPRG). Asn-268 is a glycosylation site (N-linked (GlcNAc...) asparagine).

It belongs to the neugrin family. In terms of assembly, forms a regulatory protein-RNA complex, consisting of RCC1L, NGRN, RPUSD3, RPUSD4, TRUB2, FASTKD2 and 16S mt-rRNA. Interacts with 16S mt-rRNA; this interaction is direct. In terms of tissue distribution, expressed at high levels in heart, brain and skeletal muscle. In brain, mainly expressed in neurons rather than glial cells.

It is found in the nucleus. The protein resides in the secreted. Its subcellular location is the mitochondrion membrane. In terms of biological role, plays an essential role in mitochondrial ribosome biogenesis. As a component of a functional protein-RNA module, consisting of RCC1L, NGRN, RPUSD3, RPUSD4, TRUB2, FASTKD2 and 16S mitochondrial ribosomal RNA (16S mt-rRNA), controls 16S mt-rRNA abundance and is required for intra-mitochondrial translation of core subunits of the oxidative phosphorylation system. This chain is Neugrin, found in Homo sapiens (Human).